A 460-amino-acid chain; its full sequence is Pyruvate dehydrogenase E1 component subunit beta (460 aa).

Residues 2–78 (PVEILMPALS…KVNTPIAVLL (77 aa)) enclose the Lipoyl-binding domain. Lysine 43 is modified (N6-lipoyllysine). The tract at residues 91–131 (KTEAPKAETPKPAAAEAPAASAAPVAAQPKADVPSDPAIPA) is disordered. Over residues 100-121 (PKPAAAEAPAASAAPVAAQPKA) the composition is skewed to low complexity. Glutamate 194 contacts thiamine diphosphate.

Heterodimer of an alpha and a beta chain. (R)-lipoate is required as a cofactor. Requires thiamine diphosphate as cofactor.

The catalysed reaction is N(6)-[(R)-lipoyl]-L-lysyl-[protein] + pyruvate + H(+) = N(6)-[(R)-S(8)-acetyldihydrolipoyl]-L-lysyl-[protein] + CO2. In terms of biological role, the pyruvate dehydrogenase complex catalyzes the overall conversion of pyruvate to acetyl-CoA and CO(2). It contains multiple copies of three enzymatic components: pyruvate dehydrogenase (E1), dihydrolipoamide acetyltransferase (E2) and lipoamide dehydrogenase (E3). The chain is Pyruvate dehydrogenase E1 component subunit beta (pdhB) from Rhizobium meliloti (strain 1021) (Ensifer meliloti).